The following is a 346-amino-acid chain: Tetraacyldisaccharide 4'-kinase (346 aa).

Thr53–Thr60 is an ATP binding site.

The protein belongs to the LpxK family.

The enzyme catalyses a lipid A disaccharide + ATP = a lipid IVA + ADP + H(+). It functions in the pathway glycolipid biosynthesis; lipid IV(A) biosynthesis; lipid IV(A) from (3R)-3-hydroxytetradecanoyl-[acyl-carrier-protein] and UDP-N-acetyl-alpha-D-glucosamine: step 6/6. Functionally, transfers the gamma-phosphate of ATP to the 4'-position of a tetraacyldisaccharide 1-phosphate intermediate (termed DS-1-P) to form tetraacyldisaccharide 1,4'-bis-phosphate (lipid IVA). This is Tetraacyldisaccharide 4'-kinase from Bartonella tribocorum (strain CIP 105476 / IBS 506).